The primary structure comprises 475 residues: Chemotaxis protein MotD (475 aa).

3 disordered regions span residues 1 to 175 (MRPL…PVGG), 195 to 243 (LQPE…SEPD), and 408 to 475 (GDSA…HVYM). The segment covering 9–22 (RTSAASRPAQSLSV) has biased composition (polar residues). Residues 79 to 100 (ADVPASMADAASPDARPASERA) show a composition bias toward low complexity. Residues 143-155 (HSRETVHALRDAI) are compositionally biased toward basic and acidic residues. Gly residues predominate over residues 408 to 417 (GDSASGGGGQ). The span at 427 to 449 (EGRERAGDDGQGRQPRDGGRAAT) shows a compositional bias: basic and acidic residues.

It is found in the cytoplasm. Functionally, required for the rotation of the flagellar motor. Has a positive effect as flagellar rotation increases when an excess of motd is present. The protein is Chemotaxis protein MotD (motD) of Rhizobium meliloti (Ensifer meliloti).